Reading from the N-terminus, the 125-residue chain is Small ribosomal subunit protein eS6 (125 aa).

The protein belongs to the eukaryotic ribosomal protein eS6 family.

This chain is Small ribosomal subunit protein eS6, found in Pyrococcus abyssi (strain GE5 / Orsay).